The primary structure comprises 368 residues: 2-aminoethylphosphonate--pyruvate transaminase (368 aa).

Position 192 is an N6-(pyridoxal phosphate)lysine (K192).

Belongs to the class-V pyridoxal-phosphate-dependent aminotransferase family. PhnW subfamily. As to quaternary structure, homodimer. It depends on pyridoxal 5'-phosphate as a cofactor.

The catalysed reaction is (2-aminoethyl)phosphonate + pyruvate = phosphonoacetaldehyde + L-alanine. Involved in phosphonate degradation. In Pseudomonas putida (strain GB-1), this protein is 2-aminoethylphosphonate--pyruvate transaminase.